Consider the following 395-residue polypeptide: S-adenosylmethionine synthase (395 aa).

An ATP-binding site is contributed by H16. D18 is a binding site for Mg(2+). Position 44 (E44) interacts with K(+). L-methionine-binding residues include E57 and Q100. Residues 100–110 (QSPDIAQGVDR) form a flexible loop region. ATP-binding positions include 167–169 (DAK), 233–234 (RF), D242, 248–249 (RK), A265, and K269. D242 is a binding site for L-methionine. Position 273 (K273) interacts with L-methionine.

Belongs to the AdoMet synthase family. Homotetramer; dimer of dimers. Requires Mg(2+) as cofactor. The cofactor is K(+).

The protein resides in the cytoplasm. The catalysed reaction is L-methionine + ATP + H2O = S-adenosyl-L-methionine + phosphate + diphosphate. It functions in the pathway amino-acid biosynthesis; S-adenosyl-L-methionine biosynthesis; S-adenosyl-L-methionine from L-methionine: step 1/1. Catalyzes the formation of S-adenosylmethionine (AdoMet) from methionine and ATP. The overall synthetic reaction is composed of two sequential steps, AdoMet formation and the subsequent tripolyphosphate hydrolysis which occurs prior to release of AdoMet from the enzyme. This chain is S-adenosylmethionine synthase, found in Paraburkholderia phymatum (strain DSM 17167 / CIP 108236 / LMG 21445 / STM815) (Burkholderia phymatum).